A 441-amino-acid polypeptide reads, in one-letter code: Mitochondrial distribution and morphology protein 12 (441 aa).

One can recognise an SMP-LTD domain in the interval 1-441 (MSIDIDWERA…VYPSFWTFLV (441 aa)). Disordered stretches follow at residues 68-89 (DFYEDGDEDLSVSSEEQSPMRE) and 183-289 (RAVT…RMRE). Polar residues-rich tracts occupy residues 226–245 (SRPSTANTGNTLLSRGSVST) and 253–263 (PSQTLLANNPG).

The protein belongs to the MDM12 family. In terms of assembly, component of the ER-mitochondria encounter structure (ERMES) or MDM complex, composed of MMM1, MDM10, MDM12 and MDM34. An MMM1 homodimer associates with one molecule of MDM12 on each side in a pairwise head-to-tail manner, and the SMP-LTD domains of MMM1 and MDM12 generate a continuous hydrophobic tunnel for phospholipid trafficking.

Its subcellular location is the mitochondrion outer membrane. It is found in the endoplasmic reticulum membrane. Its function is as follows. Component of the ERMES/MDM complex, which serves as a molecular tether to connect the endoplasmic reticulum (ER) and mitochondria. Components of this complex are involved in the control of mitochondrial shape and protein biogenesis, and function in nonvesicular lipid trafficking between the ER and mitochondria. MDM12 is required for the interaction of the ER-resident membrane protein MMM1 and the outer mitochondrial membrane-resident beta-barrel protein MDM10. The MDM12-MMM1 subcomplex functions in the major beta-barrel assembly pathway that is responsible for biogenesis of all mitochondrial outer membrane beta-barrel proteins, and acts in a late step after the SAM complex. The MDM10-MDM12-MMM1 subcomplex further acts in the TOM40-specific pathway after the action of the MDM12-MMM1 complex. Essential for establishing and maintaining the structure of mitochondria and maintenance of mtDNA nucleoids. The sequence is that of Mitochondrial distribution and morphology protein 12 from Paracoccidioides lutzii (strain ATCC MYA-826 / Pb01) (Paracoccidioides brasiliensis).